The sequence spans 158 residues: Transcription elongation factor GreA (158 aa).

Belongs to the GreA/GreB family.

Necessary for efficient RNA polymerase transcription elongation past template-encoded arresting sites. The arresting sites in DNA have the property of trapping a certain fraction of elongating RNA polymerases that pass through, resulting in locked ternary complexes. Cleavage of the nascent transcript by cleavage factors such as GreA or GreB allows the resumption of elongation from the new 3'terminus. GreA releases sequences of 2 to 3 nucleotides. The polypeptide is Transcription elongation factor GreA (Salmonella typhi).